We begin with the raw amino-acid sequence, 159 residues long: Ribosomal RNA large subunit methyltransferase H (159 aa).

Residues L76, G107, and L126–L131 each bind S-adenosyl-L-methionine.

It belongs to the RNA methyltransferase RlmH family. Homodimer.

The protein resides in the cytoplasm. The catalysed reaction is pseudouridine(1915) in 23S rRNA + S-adenosyl-L-methionine = N(3)-methylpseudouridine(1915) in 23S rRNA + S-adenosyl-L-homocysteine + H(+). In terms of biological role, specifically methylates the pseudouridine at position 1915 (m3Psi1915) in 23S rRNA. The chain is Ribosomal RNA large subunit methyltransferase H from Cupriavidus necator (strain ATCC 17699 / DSM 428 / KCTC 22496 / NCIMB 10442 / H16 / Stanier 337) (Ralstonia eutropha).